Reading from the N-terminus, the 263-residue chain is HTH-type transcriptional repressor NanR (263 aa).

Residues 1-22 (MGLMNAFDSQTEDSSPAIGRNL) form a disordered region. The region spanning 30-98 (KKLSEMVEEE…NGERARVSRP (69 aa)) is the HTH gntR-type domain. Positions 58–77 (ERELMAFFNVGRPSVREALA) form a DNA-binding region, H-T-H motif.

It belongs to the NanR family.

Functionally, transcriptional repressor that controls expression of the genes required for the catabolism of sialic acids. In Shigella boydii serotype 4 (strain Sb227), this protein is HTH-type transcriptional repressor NanR.